The following is a 129-amino-acid chain: M-zodatoxin-Lt8k (129 aa).

An N-terminal signal peptide occupies residues 1–20; the sequence is MKYFVVALALVAAFACIAES. Positions 21-60 are excised as a propeptide; sequence KPAESEHELAEVEEENELADLEDAVWLEHLADLSDLEEAR.

Belongs to the cationic peptide 06 (cytoinsectotoxin) family. Expressed by the venom gland.

It localises to the secreted. Its function is as follows. Insecticidal, cytolytic and antimicrobial peptide. Forms voltage-dependent, ion-permeable channels in membranes. At high concentration causes cell membrane lysis. This is M-zodatoxin-Lt8k (cit 1-10) from Lachesana tarabaevi (Spider).